The primary structure comprises 641 residues: Chaperone protein DnaK (641 aa).

A Phosphothreonine; by autocatalysis modification is found at Thr-198. 3 stretches are compositionally biased toward basic and acidic residues: residues 514–529 (AEANAEADKKRREGVE), 540–554 (SSEKSLQEHGDKVSE), and 608–621 (AHADAAADAKRSGD). Disordered stretches follow at residues 514–554 (AEAN…KVSE) and 604–641 (QTESAHADAAADAKRSGDDVVDADYEEVKDEDDRKRSA). Over residues 622–633 (DVVDADYEEVKD) the composition is skewed to acidic residues.

The protein belongs to the heat shock protein 70 family.

Acts as a chaperone. In Sinorhizobium medicae (strain WSM419) (Ensifer medicae), this protein is Chaperone protein DnaK.